Consider the following 60-residue polypeptide: uncharacterized protein (60 aa).

The segment at 27 to 50 (VKNNNNNNNNNNNNNNNNNNNNNK) is disordered. The span at 29–49 (NNNNNNNNNNNNNNNNNNNNN) shows a compositional bias: low complexity.

This is an uncharacterized protein from Dictyostelium discoideum (Social amoeba).